The primary structure comprises 251 residues: Hydroxyacylglutathione hydrolase (251 aa).

Zn(2+) contacts are provided by histidine 53, histidine 55, aspartate 57, histidine 58, histidine 110, aspartate 127, and histidine 165.

This sequence belongs to the metallo-beta-lactamase superfamily. Glyoxalase II family. In terms of assembly, monomer. The cofactor is Zn(2+).

The enzyme catalyses an S-(2-hydroxyacyl)glutathione + H2O = a 2-hydroxy carboxylate + glutathione + H(+). It participates in secondary metabolite metabolism; methylglyoxal degradation; (R)-lactate from methylglyoxal: step 2/2. Thiolesterase that catalyzes the hydrolysis of S-D-lactoyl-glutathione to form glutathione and D-lactic acid. This is Hydroxyacylglutathione hydrolase from Erwinia tasmaniensis (strain DSM 17950 / CFBP 7177 / CIP 109463 / NCPPB 4357 / Et1/99).